The following is a 170-amino-acid chain: ATP synthase subunit b (170 aa).

The helical transmembrane segment at 15-37 threads the bilayer; that stretch reads FNLFETNILNWAVVVFGLYKFLP.

The protein belongs to the ATPase B chain family. As to quaternary structure, F-type ATPases have 2 components, F(1) - the catalytic core - and F(0) - the membrane proton channel. F(1) has five subunits: alpha(3), beta(3), gamma(1), delta(1), epsilon(1). F(0) has four main subunits: a(1), b(1), b'(1) and c(10-14). The alpha and beta chains form an alternating ring which encloses part of the gamma chain. F(1) is attached to F(0) by a central stalk formed by the gamma and epsilon chains, while a peripheral stalk is formed by the delta, b and b' chains.

The protein localises to the cellular thylakoid membrane. Its function is as follows. F(1)F(0) ATP synthase produces ATP from ADP in the presence of a proton or sodium gradient. F-type ATPases consist of two structural domains, F(1) containing the extramembraneous catalytic core and F(0) containing the membrane proton channel, linked together by a central stalk and a peripheral stalk. During catalysis, ATP synthesis in the catalytic domain of F(1) is coupled via a rotary mechanism of the central stalk subunits to proton translocation. In terms of biological role, component of the F(0) channel, it forms part of the peripheral stalk, linking F(1) to F(0). This is ATP synthase subunit b from Prochlorococcus marinus (strain MIT 9312).